The sequence spans 381 residues: 5-amino-6-(D-ribitylamino)uracil--L-tyrosine 4-hydroxyphenyl transferase (381 aa).

Positions 59–306 constitute a Radical SAM core domain; the sequence is VTYVVNRNIN…TAVARIFLGN (248 aa). 3 residues coordinate [4Fe-4S] cluster: C73, C77, and C80.

It belongs to the radical SAM superfamily. CofH family. Consists of two subunits, CofG and CofH. [4Fe-4S] cluster is required as a cofactor.

It catalyses the reaction 5-amino-6-(D-ribitylamino)uracil + L-tyrosine + S-adenosyl-L-methionine = 5-amino-5-(4-hydroxybenzyl)-6-(D-ribitylimino)-5,6-dihydrouracil + 2-iminoacetate + 5'-deoxyadenosine + L-methionine + H(+). The protein operates within cofactor biosynthesis; coenzyme F0 biosynthesis. Its function is as follows. Catalyzes the radical-mediated synthesis of 5-amino-5-(4-hydroxybenzyl)-6-(D-ribitylimino)-5,6-dihydrouracil from 5-amino-6-(D-ribitylamino)uracil and L-tyrosine. This Cyanothece sp. (strain PCC 7425 / ATCC 29141) protein is 5-amino-6-(D-ribitylamino)uracil--L-tyrosine 4-hydroxyphenyl transferase.